Reading from the N-terminus, the 86-residue chain is Antitoxin VapB33 (86 aa).

In terms of biological role, antitoxin component of a type II toxin-antitoxin (TA) system. Upon expression in M.smegmatis neutralizes the effect of cognate toxin VapC33. The chain is Antitoxin VapB33 (vapB33) from Mycobacterium tuberculosis (strain ATCC 25618 / H37Rv).